Consider the following 200-residue polypeptide: Probable GTP-binding protein EngB (200 aa).

In terms of domain architecture, EngB-type G spans 24-199; the sequence is EGAEVAFAGR…RGVIGGWLGL (176 aa). GTP contacts are provided by residues 32-39, 59-63, 77-80, 144-147, and 178-180; these read GRSNAGKS, GRTQQ, DLPG, TKAD, and FSG. Residues S39 and T61 each coordinate Mg(2+).

This sequence belongs to the TRAFAC class TrmE-Era-EngA-EngB-Septin-like GTPase superfamily. EngB GTPase family. The cofactor is Mg(2+).

Its function is as follows. Necessary for normal cell division and for the maintenance of normal septation. This is Probable GTP-binding protein EngB from Stenotrophomonas maltophilia (strain K279a).